The sequence spans 82 residues: Toxin NaTx-13 (82 aa).

An LCN-type CS-alpha/beta domain is found at 6 to 70 (PGGYPVNQFK…KNSIEVFSCG (65 aa)). Cystine bridges form between Cys-16–Cys-69, Cys-20–Cys-44, Cys-30–Cys-49, and Cys-34–Cys-51.

It belongs to the long (4 C-C) scorpion toxin superfamily. Sodium channel inhibitor family. Expressed by the venom gland.

It localises to the secreted. In terms of biological role, probable sodium channel inhibitor. This chain is Toxin NaTx-13, found in Centruroides sculpturatus (Arizona bark scorpion).